A 150-amino-acid polypeptide reads, in one-letter code: Large ribosomal subunit protein eL19 (150 aa).

A disordered region spans residues 59-89; sequence SRYRARIRHEQKKKGRHRGPGSRKGKKTARM. The span at 61–89 shows a compositional bias: basic residues; that stretch reads YRARIRHEQKKKGRHRGPGSRKGKKTARM.

Belongs to the eukaryotic ribosomal protein eL19 family. In terms of assembly, part of the 50S ribosomal subunit.

In terms of biological role, binds to the 23S rRNA. In Pyrococcus horikoshii (strain ATCC 700860 / DSM 12428 / JCM 9974 / NBRC 100139 / OT-3), this protein is Large ribosomal subunit protein eL19.